The following is a 572-amino-acid chain: Sulfite reductase [NADPH] hemoprotein beta-component (572 aa).

Residues C437, C443, C482, and C486 each contribute to the [4Fe-4S] cluster site. Residue C486 coordinates siroheme.

Belongs to the nitrite and sulfite reductase 4Fe-4S domain family. As to quaternary structure, alpha(8)-beta(8). The alpha component is a flavoprotein, the beta component is a hemoprotein. It depends on siroheme as a cofactor. The cofactor is [4Fe-4S] cluster.

The enzyme catalyses hydrogen sulfide + 3 NADP(+) + 3 H2O = sulfite + 3 NADPH + 4 H(+). It participates in sulfur metabolism; hydrogen sulfide biosynthesis; hydrogen sulfide from sulfite (NADPH route): step 1/1. Its function is as follows. Component of the sulfite reductase complex that catalyzes the 6-electron reduction of sulfite to sulfide. This is one of several activities required for the biosynthesis of L-cysteine from sulfate. This Staphylococcus epidermidis (strain ATCC 35984 / DSM 28319 / BCRC 17069 / CCUG 31568 / BM 3577 / RP62A) protein is Sulfite reductase [NADPH] hemoprotein beta-component.